The following is a 401-amino-acid chain: NADH-ubiquinone oxidoreductase 49 kDa subunit (401 aa).

This sequence belongs to the complex I 49 kDa subunit family.

It localises to the mitochondrion. The enzyme catalyses a ubiquinone + NADH + 5 H(+)(in) = a ubiquinol + NAD(+) + 4 H(+)(out). Core subunit of the mitochondrial membrane respiratory chain NADH dehydrogenase (Complex I) that is believed to belong to the minimal assembly required for catalysis. Complex I functions in the transfer of electrons from NADH to the respiratory chain. The immediate electron acceptor for the enzyme is believed to be ubiquinone. Component of the iron-sulfur (IP) fragment of the enzyme. This Acanthamoeba castellanii (Amoeba) protein is NADH-ubiquinone oxidoreductase 49 kDa subunit (NAD7).